We begin with the raw amino-acid sequence, 186 residues long: Ribosome-recycling factor (186 aa).

Belongs to the RRF family.

The protein resides in the cytoplasm. In terms of biological role, responsible for the release of ribosomes from messenger RNA at the termination of protein biosynthesis. May increase the efficiency of translation by recycling ribosomes from one round of translation to another. The protein is Ribosome-recycling factor of Rickettsia canadensis (strain McKiel).